The following is a 350-amino-acid chain: Glycerol-1-phosphate dehydrogenase [NAD(P)+] (350 aa).

NAD(+) is bound by residues 96 to 100 and 118 to 121; these read GNIID and TAPS. Aspartate 123 contributes to the substrate binding site. Residue serine 127 participates in NAD(+) binding. Aspartate 170 serves as a coordination point for substrate. The Zn(2+) site is built by aspartate 170 and histidine 250. Histidine 254 contacts substrate. A Zn(2+)-binding site is contributed by histidine 266.

This sequence belongs to the glycerol-1-phosphate dehydrogenase family. In terms of assembly, homodimer. Zn(2+) serves as cofactor.

The protein resides in the cytoplasm. The enzyme catalyses sn-glycerol 1-phosphate + NAD(+) = dihydroxyacetone phosphate + NADH + H(+). The catalysed reaction is sn-glycerol 1-phosphate + NADP(+) = dihydroxyacetone phosphate + NADPH + H(+). The protein operates within membrane lipid metabolism; glycerophospholipid metabolism. Functionally, catalyzes the NAD(P)H-dependent reduction of dihydroxyacetonephosphate (DHAP or glycerone phosphate) to glycerol 1-phosphate (G1P). The G1P thus generated is used as the glycerophosphate backbone of phospholipids in the cellular membranes of Archaea. The polypeptide is Glycerol-1-phosphate dehydrogenase [NAD(P)+] (Sulfurisphaera tokodaii (strain DSM 16993 / JCM 10545 / NBRC 100140 / 7) (Sulfolobus tokodaii)).